Reading from the N-terminus, the 354-residue chain is Sulfate/thiosulfate import ATP-binding protein CysA 2 (354 aa).

An ABC transporter domain is found at 3–237; that stretch reads IHIQQVNKHF…PSNPFVYEFL (235 aa). An ATP-binding site is contributed by 35-42; that stretch reads GPSGSGKT.

It belongs to the ABC transporter superfamily. Sulfate/tungstate importer (TC 3.A.1.6) family. As to quaternary structure, the complex is composed of two ATP-binding proteins (CysA), two transmembrane proteins (CysT and CysW) and a solute-binding protein (CysP).

Its subcellular location is the cell inner membrane. The enzyme catalyses sulfate(out) + ATP + H2O = sulfate(in) + ADP + phosphate + H(+). It carries out the reaction thiosulfate(out) + ATP + H2O = thiosulfate(in) + ADP + phosphate + H(+). Functionally, part of the ABC transporter complex CysAWTP involved in sulfate/thiosulfate import. Responsible for energy coupling to the transport system. This is Sulfate/thiosulfate import ATP-binding protein CysA 2 from Shewanella oneidensis (strain ATCC 700550 / JCM 31522 / CIP 106686 / LMG 19005 / NCIMB 14063 / MR-1).